Here is a 199-residue protein sequence, read N- to C-terminus: Recombination protein RecR (199 aa).

A C4-type zinc finger spans residues 57 to 72 (CQSCRTFTEETYCPIC). A Toprim domain is found at 81-176 (EVICVVETPA…TVSRIAHGVP (96 aa)).

It belongs to the RecR family.

Functionally, may play a role in DNA repair. It seems to be involved in an RecBC-independent recombinational process of DNA repair. It may act with RecF and RecO. This is Recombination protein RecR from Shewanella pealeana (strain ATCC 700345 / ANG-SQ1).